A 346-amino-acid chain; its full sequence is Phosphate acyltransferase (346 aa).

Belongs to the PlsX family. As to quaternary structure, homodimer. Probably interacts with PlsY.

The protein resides in the cytoplasm. The catalysed reaction is a fatty acyl-[ACP] + phosphate = an acyl phosphate + holo-[ACP]. Its pathway is lipid metabolism; phospholipid metabolism. Functionally, catalyzes the reversible formation of acyl-phosphate (acyl-PO(4)) from acyl-[acyl-carrier-protein] (acyl-ACP). This enzyme utilizes acyl-ACP as fatty acyl donor, but not acyl-CoA. In Pelobacter propionicus (strain DSM 2379 / NBRC 103807 / OttBd1), this protein is Phosphate acyltransferase.